Here is an 835-residue protein sequence, read N- to C-terminus: DNA primase (835 aa).

The CHC2-type zinc-finger motif lies at 778–817; that stretch reads CLNFKHRLKTQSVRIFLSLHLTPDNCVTLTLMSQCFASKC.

It belongs to the herpesviridae DNA primase family. As to quaternary structure, associates with the helicase and the primase-associated factor to form the helicase-primase factor.

It is found in the host nucleus. Essential component of the helicase/primase complex. Unwinds the DNA at the replication forks and generates single-stranded DNA for both leading and lagging strand synthesis. The primase initiates primer synthesis and thereby produces large amount of short RNA primers on the lagging strand that the polymerase elongates using dNTPs. The sequence is that of DNA primase (56) from Saimiri sciureus (Common squirrel monkey).